We begin with the raw amino-acid sequence, 325 residues long: tRNA N(3)-methylcytidine methyltransferase Mettl2 (325 aa).

Tryptophan 96 and tyrosine 100 together coordinate S-adenosyl-L-methionine. The S-adenosyl-L-homocysteine site is built by tyrosine 100, histidine 112, glutamate 138, glycine 140, aspartate 165, aspartate 191, and isoleucine 212. The S-adenosyl-L-methionine site is built by glycine 140, aspartate 165, aspartate 191, and isoleucine 212.

It belongs to the methyltransferase superfamily. METL family. Interacts with Psn. In terms of tissue distribution, widely expressed. Expressed in ovaries, head, thorax and abdomen of adult flies, and in the CNS of third instar larvae. Isoform 2 is predominantly expressed in larvae and in adult tissues that have been tested.

Functionally, probable methyltransferase. The chain is tRNA N(3)-methylcytidine methyltransferase Mettl2 from Drosophila melanogaster (Fruit fly).